We begin with the raw amino-acid sequence, 118 residues long: UPF0102 protein RSal33209_1090 (118 aa).

It belongs to the UPF0102 family.

The sequence is that of UPF0102 protein RSal33209_1090 from Renibacterium salmoninarum (strain ATCC 33209 / DSM 20767 / JCM 11484 / NBRC 15589 / NCIMB 2235).